The sequence spans 452 residues: Phosphoglucosamine mutase (452 aa).

Residue Ser-98 is the Phosphoserine intermediate of the active site. The Mg(2+) site is built by Ser-98, Asp-239, Asp-241, and Asp-243. Ser-98 is modified (phosphoserine).

This sequence belongs to the phosphohexose mutase family. Requires Mg(2+) as cofactor. Activated by phosphorylation.

It carries out the reaction alpha-D-glucosamine 1-phosphate = D-glucosamine 6-phosphate. In terms of biological role, catalyzes the conversion of glucosamine-6-phosphate to glucosamine-1-phosphate. This chain is Phosphoglucosamine mutase, found in Anaplasma marginale (strain St. Maries).